We begin with the raw amino-acid sequence, 452 residues long: MQRRIMGIETEFGVTCTFHGHRRLSPDEVARYLFRRVVSWGRSSNVFLRNGARLYLDVGSHPEYATAECDNLIQLVNHDRAGERVLEELLIDAEQRLAEEGIGGDIYLFKNNTDSAGNSYGCHENFLVARAGEFSRISDVLLPFLVTRQLICGAGKVLQTPKAATFCLSQRAEHIWEGVSSATTRSRPIINTRDEPHADAEKYRRLHVIVGDSNMSESTTMLKVGTAALVLEMIEAGVSFRDFALDNPIRAIREVSHDVTGRRPVRLAGGRQASALDIQREYHARAVEHLQNRDPDPQVTQVVDLWGRMLDAVETQDFAKVDTEIDWVIKRKLFQRYQDRHGFELADPKIAQLDLAYHDIKRGRGVFDVLQRKGLVKRITEDETIEAAVDTPPQTTRAKLRGEFITAAQEAGRDFTVDWVHLKLNDQAQRTVLCKDPFRSVDERVERLIASM.

Residue glutamate 9 coordinates Mg(2+). Position 53 (arginine 53) interacts with ATP. Tyrosine 55 lines the Mg(2+) pocket. Residue aspartate 57 is the Proton acceptor of the active site. Position 63 (glutamate 63) interacts with Mg(2+). Residues threonine 66 and tryptophan 419 each contribute to the ATP site.

The protein belongs to the Pup ligase/Pup deamidase family. Pup-conjugating enzyme subfamily.

It carries out the reaction ATP + [prokaryotic ubiquitin-like protein]-L-glutamate + [protein]-L-lysine = ADP + phosphate + N(6)-([prokaryotic ubiquitin-like protein]-gamma-L-glutamyl)-[protein]-L-lysine.. It participates in protein degradation; proteasomal Pup-dependent pathway. Its pathway is protein modification; protein pupylation. Functionally, catalyzes the covalent attachment of the prokaryotic ubiquitin-like protein modifier Pup to the proteasomal substrate proteins, thereby targeting them for proteasomal degradation. This tagging system is termed pupylation. The ligation reaction involves the side-chain carboxylate of the C-terminal glutamate of Pup and the side-chain amino group of a substrate lysine. This chain is Pup--protein ligase, found in Rhodococcus jostii (strain RHA1).